The following is a 256-amino-acid chain: Thiazole synthase (256 aa).

K99 acts as the Schiff-base intermediate with DXP in catalysis. 1-deoxy-D-xylulose 5-phosphate-binding positions include G160, 186 to 187 (AG), and 208 to 209 (NT).

Belongs to the ThiG family. As to quaternary structure, homotetramer. Forms heterodimers with either ThiH or ThiS.

The protein resides in the cytoplasm. The catalysed reaction is [ThiS sulfur-carrier protein]-C-terminal-Gly-aminoethanethioate + 2-iminoacetate + 1-deoxy-D-xylulose 5-phosphate = [ThiS sulfur-carrier protein]-C-terminal Gly-Gly + 2-[(2R,5Z)-2-carboxy-4-methylthiazol-5(2H)-ylidene]ethyl phosphate + 2 H2O + H(+). The protein operates within cofactor biosynthesis; thiamine diphosphate biosynthesis. Its function is as follows. Catalyzes the rearrangement of 1-deoxy-D-xylulose 5-phosphate (DXP) to produce the thiazole phosphate moiety of thiamine. Sulfur is provided by the thiocarboxylate moiety of the carrier protein ThiS. In vitro, sulfur can be provided by H(2)S. This chain is Thiazole synthase, found in Neorickettsia sennetsu (strain ATCC VR-367 / Miyayama) (Ehrlichia sennetsu).